We begin with the raw amino-acid sequence, 204 residues long: Large ribosomal subunit protein bL25 (204 aa).

S123 bears the Phosphoserine mark.

Belongs to the bacterial ribosomal protein bL25 family. CTC subfamily. In terms of assembly, part of the 50S ribosomal subunit; part of the 5S rRNA/L5/L18/L25 subcomplex. Contacts the 5S rRNA. Binds to the 5S rRNA independently of L5 and L18.

Its function is as follows. This is one of the proteins that binds to the 5S RNA in the ribosome where it forms part of the central protuberance. This is Large ribosomal subunit protein bL25 from Pseudomonas aeruginosa (strain UCBPP-PA14).